The sequence spans 275 residues: Glycerol-3-phosphate dehydrogenase [NAD(P)+] (275 aa).

Trp-12, Arg-32, and Lys-105 together coordinate NADPH. Positions 105, 133, and 135 each coordinate sn-glycerol 3-phosphate. Position 137 (Ala-137) interacts with NADPH. Positions 188, 241, 251, 252, and 253 each coordinate sn-glycerol 3-phosphate. Lys-188 functions as the Proton acceptor in the catalytic mechanism. Arg-252 serves as a coordination point for NADPH.

The protein belongs to the NAD-dependent glycerol-3-phosphate dehydrogenase family.

The protein localises to the cytoplasm. The enzyme catalyses sn-glycerol 3-phosphate + NAD(+) = dihydroxyacetone phosphate + NADH + H(+). The catalysed reaction is sn-glycerol 3-phosphate + NADP(+) = dihydroxyacetone phosphate + NADPH + H(+). The protein operates within membrane lipid metabolism; glycerophospholipid metabolism. Functionally, catalyzes the reduction of the glycolytic intermediate dihydroxyacetone phosphate (DHAP) to sn-glycerol 3-phosphate (G3P), the key precursor for phospholipid synthesis. This chain is Glycerol-3-phosphate dehydrogenase [NAD(P)+], found in Paramagnetospirillum magneticum (strain ATCC 700264 / AMB-1) (Magnetospirillum magneticum).